We begin with the raw amino-acid sequence, 340 residues long: Ketol-acid reductoisomerase (NADP(+)) (340 aa).

Residues 1 to 182 (MRVYYDRDCD…GGGRSGIIET (182 aa)) form the KARI N-terminal Rossmann domain. NADP(+) is bound by residues 24-27 (YGSQ), Arg48, Ser51, Ser53, and 83-86 (DELQ). His108 is an active-site residue. Gly134 lines the NADP(+) pocket. The KARI C-terminal knotted domain maps to 183–329 (NFRQECETDL…EKLRGMMPWI (147 aa)). 4 residues coordinate Mg(2+): Asp191, Glu195, Glu227, and Glu231. Ser252 lines the substrate pocket.

This sequence belongs to the ketol-acid reductoisomerase family. Requires Mg(2+) as cofactor.

It catalyses the reaction (2R)-2,3-dihydroxy-3-methylbutanoate + NADP(+) = (2S)-2-acetolactate + NADPH + H(+). The catalysed reaction is (2R,3R)-2,3-dihydroxy-3-methylpentanoate + NADP(+) = (S)-2-ethyl-2-hydroxy-3-oxobutanoate + NADPH + H(+). The protein operates within amino-acid biosynthesis; L-isoleucine biosynthesis; L-isoleucine from 2-oxobutanoate: step 2/4. Its pathway is amino-acid biosynthesis; L-valine biosynthesis; L-valine from pyruvate: step 2/4. In terms of biological role, involved in the biosynthesis of branched-chain amino acids (BCAA). Catalyzes an alkyl-migration followed by a ketol-acid reduction of (S)-2-acetolactate (S2AL) to yield (R)-2,3-dihydroxy-isovalerate. In the isomerase reaction, S2AL is rearranged via a Mg-dependent methyl migration to produce 3-hydroxy-3-methyl-2-ketobutyrate (HMKB). In the reductase reaction, this 2-ketoacid undergoes a metal-dependent reduction by NADPH to yield (R)-2,3-dihydroxy-isovalerate. The chain is Ketol-acid reductoisomerase (NADP(+)) from Cereibacter sphaeroides (strain ATCC 17025 / ATH 2.4.3) (Rhodobacter sphaeroides).